Here is a 399-residue protein sequence, read N- to C-terminus: Putative glutamate--cysteine ligase 2 (399 aa).

The disordered stretch occupies residues 377 to 399 (PAVGSSHGRTDPSRNGGPSHAGA).

This sequence belongs to the glutamate--cysteine ligase type 2 family. YbdK subfamily.

It catalyses the reaction L-cysteine + L-glutamate + ATP = gamma-L-glutamyl-L-cysteine + ADP + phosphate + H(+). Its function is as follows. ATP-dependent carboxylate-amine ligase which exhibits weak glutamate--cysteine ligase activity. This is Putative glutamate--cysteine ligase 2 from Thermobifida fusca (strain YX).